The following is a 391-amino-acid chain: Phosphoglycerate kinase (391 aa).

Substrate contacts are provided by residues 21–23 (DLN), Arg36, 59–62 (HLGR), Arg113, and Arg146. Residues Lys197, Glu319, and 345–348 (GGDT) each bind ATP.

This sequence belongs to the phosphoglycerate kinase family. As to quaternary structure, monomer.

The protein localises to the cytoplasm. It carries out the reaction (2R)-3-phosphoglycerate + ATP = (2R)-3-phospho-glyceroyl phosphate + ADP. It functions in the pathway carbohydrate degradation; glycolysis; pyruvate from D-glyceraldehyde 3-phosphate: step 2/5. This Xanthomonas oryzae pv. oryzae (strain PXO99A) protein is Phosphoglycerate kinase.